The sequence spans 361 residues: Peptide chain release factor 1 (361 aa).

N5-methylglutamine is present on glutamine 235.

The protein belongs to the prokaryotic/mitochondrial release factor family. Methylated by PrmC. Methylation increases the termination efficiency of RF1.

The protein localises to the cytoplasm. Functionally, peptide chain release factor 1 directs the termination of translation in response to the peptide chain termination codons UAG and UAA. This is Peptide chain release factor 1 from Xanthomonas campestris pv. campestris (strain B100).